A 93-amino-acid polypeptide reads, in one-letter code: UPF0147 protein PH1921.2 (93 aa).

It belongs to the UPF0147 family.

In Pyrococcus horikoshii (strain ATCC 700860 / DSM 12428 / JCM 9974 / NBRC 100139 / OT-3), this protein is UPF0147 protein PH1921.2.